The chain runs to 320 residues: Beta-ketoacyl-[acyl-carrier-protein] synthase III (320 aa).

Residues Cys112 and His245 contribute to the active site. Residues 246-250 form an ACP-binding region; that stretch reads QANIR. Residue Asn275 is part of the active site.

It belongs to the thiolase-like superfamily. FabH family. Homodimer.

The protein resides in the cytoplasm. The enzyme catalyses malonyl-[ACP] + acetyl-CoA + H(+) = 3-oxobutanoyl-[ACP] + CO2 + CoA. It participates in lipid metabolism; fatty acid biosynthesis. Functionally, catalyzes the condensation reaction of fatty acid synthesis by the addition to an acyl acceptor of two carbons from malonyl-ACP. Catalyzes the first condensation reaction which initiates fatty acid synthesis and may therefore play a role in governing the total rate of fatty acid production. Possesses both acetoacetyl-ACP synthase and acetyl transacylase activities. Its substrate specificity determines the biosynthesis of branched-chain and/or straight-chain of fatty acids. In Streptococcus thermophilus (strain ATCC BAA-250 / LMG 18311), this protein is Beta-ketoacyl-[acyl-carrier-protein] synthase III.